The primary structure comprises 150 residues: UPF0756 membrane protein HI_1074 (150 aa).

A run of 4 helical transmembrane segments spans residues methionine 1 to leucine 21, tyrosine 52 to glycine 72, glycine 81 to alanine 101, and isoleucine 123 to leucine 143.

This sequence belongs to the UPF0756 family.

It localises to the cell membrane. The sequence is that of UPF0756 membrane protein HI_1074 from Haemophilus influenzae (strain ATCC 51907 / DSM 11121 / KW20 / Rd).